Consider the following 508-residue polypeptide: Bestrophin-2 (508 aa).

Residues 1–31 are Cytoplasmic-facing; that stretch reads MTVTYTARVANARFGGFSQLLLLWRGSIYKL. Ca(2+) is bound at residue Ala-10. The chain crosses the membrane as a helical span at residues 32–51; that stretch reads LWRELLCFLGLYMALSAAYR. The Extracellular segment spans residues 52–60; it reads FLLAEEQKR. The helical transmembrane segment at 61–82 threads the bilayer; it reads YFEKLVIYCDQYASLIPVSFVL. Over 83–238 the chain is Cytoplasmic; sequence GFYVTLVVHR…WISIPLVYTQ (156 aa). A helical transmembrane segment spans residues 239–255; the sequence is VVTIAVYSYFLACLIGR. Residues 256–274 lie on the Extracellular side of the membrane; the sequence is QFLDPAQGYKDHTLDLCVP. A helical membrane pass occupies residues 275–288; the sequence is IFTLLQFFFYAGWL. The Cytoplasmic portion of the chain corresponds to 289-508; sequence KVAEQLINPF…PIGEEEESPA (220 aa). Gln-293, Asn-296, Asp-301, and Asp-304 together coordinate Ca(2+). The disordered stretch occupies residues 455-508; that stretch reads LREPELEPPACPEPPAPIPGPTPEPFTTVSIPGPRAPAPPWLPSPIGEEEESPA. Composition is skewed to pro residues over residues 461–478 and 488–497; these read EPPACPEPPAPIPGPTPE and PRAPAPPWLP.

It belongs to the anion channel-forming bestrophin (TC 1.A.46) family. Calcium-sensitive chloride channel subfamily. As to quaternary structure, pentamer. Interacts with GLUL; this interaction tethers a fraction of GLUL to the membrane, causing a decrease of cytosolic glutamine synthase (GS) activity and inhibits the chloride channel activity of BEST2 by affecting the gating at the aperture in the absence of intracellular glutamate. Expressed in mucin-secreting colonic goblet cells.

It localises to the cell membrane. The protein resides in the basolateral cell membrane. The enzyme catalyses chloride(in) = chloride(out). It catalyses the reaction hydrogencarbonate(in) = hydrogencarbonate(out). The catalysed reaction is L-glutamate(out) = L-glutamate(in). It carries out the reaction iodide(out) = iodide(in). The enzyme catalyses L-glutamine(out) = L-glutamine(in). Its activity is regulated as follows. Chloride channel activity is allosterically inhibited by GLUL/glutamine synthase (GS) which affects the gating at the aperture in the absence of intracellular glutamate. Inhibitory effect of GLUL is relieved upon increasing of intracellular level of L-glutamate. Ligand-gated anion channel that allows the movement of anions across cell membranes when activated by calcium (Ca2+). Transports a large specter of anions, namely mediates the movement of chloride, L-glutamate and iodide. Calcium-binding triggers the dilation of the aperture, but calcium-dependent gating is only effective when the size of the passing anion is bigger than the closed aperture. Mediates the calcium-activated hydrogencarbonate movement and participates in colonic hydrogencarbonate secretion concomitant with mucin secretion. In non-pigmented epithelium (NPE), mediates the efflux of intracellular L-glutamate; binding of intracellular L-glutamate activates and open both the neck and the aperture of the channel, leading to L-glutamate exit promoting chloride influx movement from the extracellular side in trans. Also exhibits a directional permeability for intracellular glutamine, in a similar manner as for L-glutamate. This is Bestrophin-2 from Mus musculus (Mouse).